We begin with the raw amino-acid sequence, 318 residues long: Aspartate carbamoyltransferase catalytic subunit (318 aa).

Residues Arg-62 and Thr-63 each coordinate carbamoyl phosphate. Lys-90 contributes to the L-aspartate binding site. The carbamoyl phosphate site is built by Arg-112, His-140, and Gln-143. L-aspartate is bound by residues Arg-173 and Arg-227. Carbamoyl phosphate is bound by residues Gly-268 and Pro-269.

This sequence belongs to the aspartate/ornithine carbamoyltransferase superfamily. ATCase family. As to quaternary structure, heterododecamer (2C3:3R2) of six catalytic PyrB chains organized as two trimers (C3), and six regulatory PyrI chains organized as three dimers (R2).

It catalyses the reaction carbamoyl phosphate + L-aspartate = N-carbamoyl-L-aspartate + phosphate + H(+). Its pathway is pyrimidine metabolism; UMP biosynthesis via de novo pathway; (S)-dihydroorotate from bicarbonate: step 2/3. Catalyzes the condensation of carbamoyl phosphate and aspartate to form carbamoyl aspartate and inorganic phosphate, the committed step in the de novo pyrimidine nucleotide biosynthesis pathway. The chain is Aspartate carbamoyltransferase catalytic subunit from Desulfotalea psychrophila (strain LSv54 / DSM 12343).